Here is a 236-residue protein sequence, read N- to C-terminus: Calcium-binding lectin RapA2 (236 aa).

It is found in the secreted. In terms of biological role, interacts specifically in a calcium-dependent manner with the acidic exopolysaccharide (EPS) and capsular polysaccharide produced by R.leguminosarum. Could be involved in the development of the biofilm matrix made of EPS. This Rhizobium johnstonii (strain DSM 114642 / LMG 32736 / 3841) (Rhizobium leguminosarum bv. viciae) protein is Calcium-binding lectin RapA2.